A 304-amino-acid chain; its full sequence is tRNA pseudouridine synthase B (304 aa).

Catalysis depends on Asp38, which acts as the Nucleophile.

Belongs to the pseudouridine synthase TruB family. Type 1 subfamily.

The enzyme catalyses uridine(55) in tRNA = pseudouridine(55) in tRNA. Functionally, responsible for synthesis of pseudouridine from uracil-55 in the psi GC loop of transfer RNAs. This chain is tRNA pseudouridine synthase B, found in Listeria monocytogenes serotype 4b (strain F2365).